Consider the following 95-residue polypeptide: Co-chaperonin GroES (95 aa).

This sequence belongs to the GroES chaperonin family. In terms of assembly, heptamer of 7 subunits arranged in a ring. Interacts with the chaperonin GroEL.

The protein localises to the cytoplasm. Its function is as follows. Together with the chaperonin GroEL, plays an essential role in assisting protein folding. The GroEL-GroES system forms a nano-cage that allows encapsulation of the non-native substrate proteins and provides a physical environment optimized to promote and accelerate protein folding. GroES binds to the apical surface of the GroEL ring, thereby capping the opening of the GroEL channel. The protein is Co-chaperonin GroES of Rickettsia rickettsii (strain Sheila Smith).